Reading from the N-terminus, the 405-residue chain is Proline-rich P65 protein (405 aa).

Residues 1–58 (MDINKPGWNQSDQQATAYDPNQQQYYGDGSTYYDPDQAVDPNQAYYPDPNTYPDAAAY) form a disordered region. Positions 7-25 (GWNQSDQQATAYDPNQQQY) are enriched in polar residues. 12 repeat units span residues 40–45 (DPNQAY), 75–80 (DPNQAY), 83–87 (DPNAY), 89–93 (DPNAY), 95–99 (DPNAY), 101–105 (DPNAY), 107–111 (DPNAY), 119–123 (DPNAY), 140–145 (DPNQAY), 148–152 (DPNAY), 154–158 (DPNAY), and 168–172 (DPNAY). The tract at residues 40-172 (DPNQAYYPDP…YVTSTDPNAY (133 aa)) is 12 X 5 AA repeats of D-P-N-Q-A-Y.

The N-terminus is blocked.

The protein localises to the cell membrane. In Mycoplasma pneumoniae (strain ATCC 29342 / M129 / Subtype 1) (Mycoplasmoides pneumoniae), this protein is Proline-rich P65 protein (p65).